A 37-amino-acid polypeptide reads, in one-letter code: Ferredoxin--NADP reductase, chloroplastic (37 aa).

NADP(+) is bound by residues Ser3 and 24 to 25 (SR).

This sequence belongs to the ferredoxin--NADP reductase type 1 family. FAD serves as cofactor.

The protein localises to the plastid. It is found in the chloroplast stroma. Its subcellular location is the chloroplast thylakoid membrane. The enzyme catalyses 2 reduced [2Fe-2S]-[ferredoxin] + NADP(+) + H(+) = 2 oxidized [2Fe-2S]-[ferredoxin] + NADPH. It functions in the pathway energy metabolism; photosynthesis. Functionally, may play a key role in regulating the relative amounts of cyclic and non-cyclic electron flow to meet the demands of the plant for ATP and reducing power. The sequence is that of Ferredoxin--NADP reductase, chloroplastic from Imperata cylindrica (Cogon grass).